Here is a 446-residue protein sequence, read N- to C-terminus: MREILHIQGGQCGNQIGAKFWEVVCAEHGIDATGRYGGDSDLQLERVNVYYNEASCGRFVPRAVLMDLEPGTMDSVRSGPYGHIFRPDNFVFGQSGAGNNSAKGHYTEGAELIDSVLDVVRKEAENCDCLQGFQVCHSLGGGTGSAMGTLLISKIREEYPDRMMLTFSVFPSPKVSDTVVEPYNATLSVHQLVENADECMVLDNEALYDICFRTLKLTTPSFGDLNHLISATMSGVTCCLRFPGQLNSDLRKLAVNLIPFPRLHFFMVGFAPLTSRGSQQYRALTVPELTQQMWDAKNMMCAADPRHGRYLTASAMFRGKMSTKEVDEQMLNVQNKNSSYFVEWIPNNVKSTVCDIPPHGLKMASTFIGNSTSIQEMFRRVSEQFTAMFRRKAFLHWYTGEGMDEMEFTEAESNMNDLVSEYQQYQDATADEEGEYEDEEEGDLQD.

Glutamine 11, glutamate 69, serine 138, glycine 142, threonine 143, glycine 144, asparagine 204, and asparagine 226 together coordinate GTP. Glutamate 69 is a Mg(2+) binding site. The segment at 422 to 446 (YQQYQDATADEEGEYEDEEEGDLQD) is disordered. Residues 429 to 446 (TADEEGEYEDEEEGDLQD) are compositionally biased toward acidic residues.

It belongs to the tubulin family. In terms of assembly, dimer of alpha and beta chains. A typical microtubule is a hollow water-filled tube with an outer diameter of 25 nm and an inner diameter of 15 nM. Alpha-beta heterodimers associate head-to-tail to form protofilaments running lengthwise along the microtubule wall with the beta-tubulin subunit facing the microtubule plus end conferring a structural polarity. Microtubules usually have 13 protofilaments but different protofilament numbers can be found in some organisms and specialized cells. Requires Mg(2+) as cofactor. As to expression, found in areas of rapidly dividing tissues.

It is found in the cytoplasm. The protein localises to the cytoskeleton. Functionally, tubulin is the major constituent of microtubules, a cylinder consisting of laterally associated linear protofilaments composed of alpha- and beta-tubulin heterodimers. Microtubules grow by the addition of GTP-tubulin dimers to the microtubule end, where a stabilizing cap forms. Below the cap, tubulin dimers are in GDP-bound state, owing to GTPase activity of alpha-tubulin. The polypeptide is Tubulin beta-1 chain (TUBB1) (Zea mays (Maize)).